The primary structure comprises 396 residues: Orotidine 5'-phosphate decarboxylase (396 aa).

Residues D46, 68–70 (KTH), 103–112 (DRKFVDIGST), Y346, and R365 each bind substrate. K105 acts as the Proton donor in catalysis.

This sequence belongs to the OMP decarboxylase family.

It carries out the reaction orotidine 5'-phosphate + H(+) = UMP + CO2. The protein operates within pyrimidine metabolism; UMP biosynthesis via de novo pathway; UMP from orotate: step 2/2. The chain is Orotidine 5'-phosphate decarboxylase (URA3) from Sordaria macrospora (strain ATCC MYA-333 / DSM 997 / K(L3346) / K-hell).